Reading from the N-terminus, the 1372-residue chain is Collagen alpha-2(I) chain (1372 aa).

An N-terminal signal peptide occupies residues Met1–Cys22. At Gln23 the chain carries Pyrrolidone carboxylic acid. A propeptide spans Gln23–Ala85 (N-terminal propeptide). Positions Gly28–Arg1135 are disordered. Pro residues predominate over residues Met59 to Pro77. Lys90 bears the Allysine mark. Over residues Gly95–Lys146 the composition is skewed to low complexity. Residues Ala147–Glu161 are compositionally biased toward basic and acidic residues. Lys183 carries the post-translational modification 5-hydroxylysine; alternate. Lys183 carries an O-linked (Gal...) hydroxylysine; alternate glycan. 7 stretches are compositionally biased toward low complexity: residues Val231–Pro260, Ala285–Pro299, Pro306–Pro327, Pro336–Val351, Pro390–Ala416, Leu476–Ala495, and Pro519–Gln537. The segment covering Gly544–Gly553 has biased composition (gly residues). Residues Pro600–Ala639 show a composition bias toward low complexity. The span at Gly640–Gly649 shows a compositional bias: gly residues. 2 stretches are compositionally biased toward low complexity: residues Arg681–Ser716 and Pro725–Ala743. A compositionally biased stretch (basic and acidic residues) spans Lys744–Lys753. Residues Glu755 to Ser771 show a composition bias toward low complexity. The span at Gly781–Gly790 shows a compositional bias: gly residues. Composition is skewed to low complexity over residues Thr792 to Thr801, Ser855 to Pro882, Ile905 to Pro927, Pro957 to Ala978, and Pro987 to Pro1007. A compositionally biased stretch (basic and acidic residues) spans Arg1011 to His1022. Residues Ala1095 to Pro1107 show a composition bias toward pro residues. Residues Asp1126–Lys1372 constitute a propeptide, C-terminal propeptide. The Fibrillar collagen NC1 domain occupies Tyr1139 to Lys1372. Intrachain disulfides connect Cys1169–Cys1201, Cys1209–Cys1370, and Cys1278–Cys1323. Ca(2+) is bound by residues Asp1187, Asn1189, Gln1190, Cys1192, and Asp1195. Asn1273 is a glycosylation site (N-linked (GlcNAc...) asparagine).

It belongs to the fibrillar collagen family. In terms of assembly, trimers of one alpha 2(I) and two alpha 1(I) chains. Interacts (via C-terminus) with TMEM131 (via PapD-L domain); the interaction is direct and is involved in assembly and TRAPPIII ER-to-Golgi transport complex-dependent secretion of collagen. Prolines at the third position of the tripeptide repeating unit (G-X-Y) are hydroxylated in some or all of the chains. In terms of tissue distribution, expressed in kidney glomeruli.

It is found in the secreted. The protein resides in the extracellular space. The protein localises to the extracellular matrix. Functionally, type I collagen is a member of group I collagen (fibrillar forming collagen). In Mus musculus (Mouse), this protein is Collagen alpha-2(I) chain (Col1a2).